The sequence spans 251 residues: Imidazole glycerol phosphate synthase subunit HisF (251 aa).

Residues Asp11 and Asp130 contribute to the active site.

Belongs to the HisA/HisF family. In terms of assembly, heterodimer of HisH and HisF.

Its subcellular location is the cytoplasm. It catalyses the reaction 5-[(5-phospho-1-deoxy-D-ribulos-1-ylimino)methylamino]-1-(5-phospho-beta-D-ribosyl)imidazole-4-carboxamide + L-glutamine = D-erythro-1-(imidazol-4-yl)glycerol 3-phosphate + 5-amino-1-(5-phospho-beta-D-ribosyl)imidazole-4-carboxamide + L-glutamate + H(+). Its pathway is amino-acid biosynthesis; L-histidine biosynthesis; L-histidine from 5-phospho-alpha-D-ribose 1-diphosphate: step 5/9. Functionally, IGPS catalyzes the conversion of PRFAR and glutamine to IGP, AICAR and glutamate. The HisF subunit catalyzes the cyclization activity that produces IGP and AICAR from PRFAR using the ammonia provided by the HisH subunit. In Chloroherpeton thalassium (strain ATCC 35110 / GB-78), this protein is Imidazole glycerol phosphate synthase subunit HisF.